The chain runs to 371 residues: MKLVFTGGGTGGHIYPALALAESFRKKGDEILYIGSNDGLERRIVPEEGFDFQGIEVAPFPRNLSVHLFSSLLKTGRGFIQARKLLRKFKPDVVIGTGGFVSGPVVLAAALQKIPTVIHEQNAYPGLANRLLAPFVTRIALNFKEADRHFKEKAREKIEITGNPIRERILTTSREEGLLNLGLRKGKKNILVFGGSQGAKNINEAMIACYRYFKNNSKLQIIHLTGMRNYQEVLQDLKEKGLDPSKYTQYKIMPYLDNMEWAYAVADLVIYRAGATGLAEITAKGIPAILIPYPYATGNHQEHNARSLEKAGAAIVIKDSELKGHKLVKLIEELINDGKRLKKMAQSSKRMGKPWARNTLINLIEDTAKGS.

Residues 10-12 (TGG), Asn-122, Arg-166, Ser-196, and Gln-301 contribute to the UDP-N-acetyl-alpha-D-glucosamine site.

It belongs to the glycosyltransferase 28 family. MurG subfamily.

It localises to the cell inner membrane. The catalysed reaction is di-trans,octa-cis-undecaprenyl diphospho-N-acetyl-alpha-D-muramoyl-L-alanyl-D-glutamyl-meso-2,6-diaminopimeloyl-D-alanyl-D-alanine + UDP-N-acetyl-alpha-D-glucosamine = di-trans,octa-cis-undecaprenyl diphospho-[N-acetyl-alpha-D-glucosaminyl-(1-&gt;4)]-N-acetyl-alpha-D-muramoyl-L-alanyl-D-glutamyl-meso-2,6-diaminopimeloyl-D-alanyl-D-alanine + UDP + H(+). It participates in cell wall biogenesis; peptidoglycan biosynthesis. Its function is as follows. Cell wall formation. Catalyzes the transfer of a GlcNAc subunit on undecaprenyl-pyrophosphoryl-MurNAc-pentapeptide (lipid intermediate I) to form undecaprenyl-pyrophosphoryl-MurNAc-(pentapeptide)GlcNAc (lipid intermediate II). In Halothermothrix orenii (strain H 168 / OCM 544 / DSM 9562), this protein is UDP-N-acetylglucosamine--N-acetylmuramyl-(pentapeptide) pyrophosphoryl-undecaprenol N-acetylglucosamine transferase.